A 775-amino-acid chain; its full sequence is Chloride channel protein CLC-a (775 aa).

The segment at 1-28 (MDEDGNLQISNSNYNGEEEGEDPENNTL) is disordered. 12 helical membrane-spanning segments follow: residues 88–108 (TLACLVGLFTGLIATLINLAV), 131–151 (GLMVFTGANLGLTLVATVLVV), 178–198 (FGFTTMMVKIVGSIGAVAAGL), 206–226 (LVHIGSCIASLLGQGGPDNHR), 248–268 (GSASGVCAAFRSPVGGVLFAL), 278–298 (ALLWRTFFSTAVVVVVLRAFI), 328–348 (AADIIPVTLIGVFGGILGSLY), 371–391 (VLLSLGVSLFTSVCLFGLPFL), 453–473 (MVSLWIFFGLYCILGLITFGI), 478–498 (GLFLPIILMGSAYGRMLGTAM), 510–530 (AVLGAASLMAGSMRMTVSLCV), and 531–551 (IFLELTNNLLLLPITMFVLLI). CBS domains are found at residues 595-658 (AKPP…FLNE) and 703-768 (TNTT…HLDK). A helical transmembrane segment spans residues 730–750 (HLLVVPKIQASGMSPVIGILT).

The protein belongs to the chloride channel (TC 2.A.49) family. As to quaternary structure, homodimer. Interacts with PP2A5. Broadly expressed in the plant.

Its subcellular location is the membrane. In terms of biological role, voltage-gated chloride channel that could play a role in the regulation of nitrate content. The sequence is that of Chloride channel protein CLC-a (CLC-A) from Arabidopsis thaliana (Mouse-ear cress).